Reading from the N-terminus, the 310-residue chain is MSREILRIATRSSPLAIWQAEYVQQRLESLHEGLRVELVRIKTQGDKILDTPLAKIGGKGLFVKELEEAMMDGRADIAVHSMKDVPMELPPGFALPVICEREDPRDAFVSNTFDGLSSLPHGACVGTSSLRRQAQVKANRPDLVVNSLRGNVQTRLGKLDAGNFDAIILAAAGLKRLEMHDRIRYEMPPEESLPAVGQGAVGIECREGDESTIELLSPLSDVDTWDRVVAERAMNRRLEGGCQVPIAGFALLEDGQLWLRGLVAEEDGSRVLRAEGTAPRGQGAELGIDIAEQLLAQGADEILKALYARQ.

Residue cysteine 242 is modified to S-(dipyrrolylmethanemethyl)cysteine.

The protein belongs to the HMBS family. In terms of assembly, monomer. Dipyrromethane serves as cofactor.

It catalyses the reaction 4 porphobilinogen + H2O = hydroxymethylbilane + 4 NH4(+). Its pathway is porphyrin-containing compound metabolism; protoporphyrin-IX biosynthesis; coproporphyrinogen-III from 5-aminolevulinate: step 2/4. Functionally, tetrapolymerization of the monopyrrole PBG into the hydroxymethylbilane pre-uroporphyrinogen in several discrete steps. The chain is Porphobilinogen deaminase from Alcanivorax borkumensis (strain ATCC 700651 / DSM 11573 / NCIMB 13689 / SK2).